Here is a 146-residue protein sequence, read N- to C-terminus: Hemoglobin subunit beta (146 aa).

Valine 1 carries the N-acetylvaline modification. Positions 2 to 146 constitute a Globin domain; that stretch reads HLTPEEKTAV…VANALAHKYH (145 aa). Residue threonine 12 is modified to Phosphothreonine. A Phosphoserine modification is found at serine 44. The residue at position 59 (lysine 59) is an N6-acetyllysine. Histidine 63 contacts heme b. The residue at position 82 (lysine 82) is an N6-acetyllysine. Residue histidine 92 coordinates heme b. S-nitrosocysteine is present on cysteine 93. N6-acetyllysine is present on lysine 144.

Belongs to the globin family. Heterotetramer of two alpha chains and two beta chains. In terms of tissue distribution, red blood cells.

Its function is as follows. Involved in oxygen transport from the lung to the various peripheral tissues. This Chlorocebus aethiops (Green monkey) protein is Hemoglobin subunit beta (HBB).